The primary structure comprises 512 residues: Sodium/proline symporter (512 aa).

Transmembrane regions (helical) follow at residues 16–36 (WQTY…GFYG), 54–74 (IGPY…WMIM), 85–105 (LSAM…YFVV), 139–159 (IISG…GFVS), 174–194 (FGLI…GYLA), 200–220 (FFQG…AMMN), 240–260 (LFKG…LGYF), 286–306 (ISWM…GIAF), 327–347 (VLFH…AIMS), 381–401 (FVMI…AIAW), 410–430 (LVGN…LFAL), 438–458 (AGAV…IAWI), and 467–487 (IFGL…TYVV).

Belongs to the sodium:solute symporter (SSF) (TC 2.A.21) family.

It localises to the cell membrane. It carries out the reaction L-proline(in) + Na(+)(in) = L-proline(out) + Na(+)(out). Its function is as follows. Catalyzes the sodium-dependent uptake of extracellular L-proline. Since most S.aureus strains are L-proline auxotrophs, this transporter may aid the bacterial persistence during an infection of tissues with low proline concentrations. The polypeptide is Sodium/proline symporter (putP) (Staphylococcus aureus (strain Newman)).